Reading from the N-terminus, the 107-residue chain is Large ribosomal subunit protein uL24 (107 aa).

Belongs to the universal ribosomal protein uL24 family. As to quaternary structure, part of the 50S ribosomal subunit.

Functionally, one of two assembly initiator proteins, it binds directly to the 5'-end of the 23S rRNA, where it nucleates assembly of the 50S subunit. One of the proteins that surrounds the polypeptide exit tunnel on the outside of the subunit. The polypeptide is Large ribosomal subunit protein uL24 (Malacoplasma penetrans (strain HF-2) (Mycoplasma penetrans)).